Here is a 383-residue protein sequence, read N- to C-terminus: Pheromone-regulated membrane protein 10 (383 aa).

The Cytoplasmic segment spans residues 1–65; sequence MIVSFGDATT…ILADTNLYPP (65 aa). The chain crosses the membrane as a helical span at residues 66 to 86; it reads WMCVLLYAFCSAMVTPYAFGG. Asp87 is a topological domain (extracellular). A helical transmembrane segment spans residues 88-108; the sequence is WVNLAISFFMGLCVGSLQFIL. The Cytoplasmic segment spans residues 109–117; sequence SQKSYMYSN. The chain crosses the membrane as a helical span at residues 118-138; the sequence is VFEISASIVVSFCGRAFGSIP. Over 139 to 141 the chain is Extracellular; the sequence is RSH. The helical transmembrane segment at 142 to 162 threads the bilayer; sequence ICFGAVTQGSLALILPGYIIL. At 163 to 180 the chain is on the cytoplasmic side; sequence CGALELQSRSLVAGAVRM. The chain crosses the membrane as a helical span at residues 181–201; it reads FYAIIYSLFLGFGITLGSALF. The Extracellular segment spans residues 202–216; the sequence is GWMYHNATNEISCPQ. The helical transmembrane segment at 217–237 threads the bilayer; it reads LISPWFRFLFVPAFTISISLL. The Cytoplasmic portion of the chain corresponds to 238–241; sequence NQAH. The chain crosses the membrane as a helical span at residues 242-262; the sequence is ISQLPVMVFISCTGYVVTYWA. At 263 to 271 the chain is on the extracellular side; that stretch reads GKHFANSTE. The helical transmembrane segment at 272–292 threads the bilayer; it reads FTAALAAFVIGVLGNLYSRIW. A topological domain (cytoplasmic) is located at residue Lys293. A helical membrane pass occupies residues 294–314; that stretch reads GLAVSAMLPAIFVQVPSGIAS. Over 315 to 352 the chain is Extracellular; sequence QNSLLSGLQSANTIVNANETITTSTSDPSSSMSFGMTM. A helical transmembrane segment spans residues 353–373; sequence IQVCVGISVGLFASSLFVYPF. Over 374-383 the chain is Cytoplasmic; sequence GKKKTGLFSL.

The protein belongs to the ThrE exporter (TC 2.A.79) family.

The protein localises to the membrane. The polypeptide is Pheromone-regulated membrane protein 10 (PRM10) (Saccharomyces cerevisiae (strain ATCC 204508 / S288c) (Baker's yeast)).